The following is a 757-amino-acid chain: Xaa-Pro dipeptidyl-peptidase (757 aa).

Catalysis depends on charge relay system residues Ser-348, Asp-468, and His-498.

The protein belongs to the peptidase S15 family. In terms of assembly, homodimer.

Its subcellular location is the cytoplasm. The enzyme catalyses Hydrolyzes Xaa-Pro-|- bonds to release unblocked, N-terminal dipeptides from substrates including Ala-Pro-|-p-nitroanilide and (sequentially) Tyr-Pro-|-Phe-Pro-|-Gly-Pro-|-Ile.. In terms of biological role, removes N-terminal dipeptides sequentially from polypeptides having unsubstituted N-termini provided that the penultimate residue is proline. This chain is Xaa-Pro dipeptidyl-peptidase, found in Streptococcus pneumoniae (strain P1031).